A 401-amino-acid chain; its full sequence is Regulatory protein E2 (401 aa).

The transactivation domain stretch occupies residues 1 to 202 (MENLSSRLDL…KRFTNVMSST (202 aa)). Residues 199-308 (MSSTSSPRAA…TPQKGHSSRL (110 aa)) form a disordered region. Composition is skewed to polar residues over residues 218-233 (PTLS…TSID) and 241-253 (GETS…QQKT). Residues 254–267 (PVRRRPYGRRRSRS) are compositionally biased toward basic residues. Residues 317–401 (DPPVVCVKGG…SVFLGQFNGS (85 aa)) form a DNA-binding domain region. A Glycyl lysine isopeptide (Lys-Gly) (interchain with G-Cter in SUMO) cross-link involves residue K324.

It belongs to the papillomaviridae E2 protein family. In terms of assembly, binds DNA as homodimer. Interacts with protein E1; this interaction greatly increases E1 DNA-binding activity. Interacts with protein L1; this interaction enhances E2-dependent replication and transcription activation. Interacts with protein L2; this interaction inhibits E2 transcriptional activity but not DNA replication function E2. Interacts with protein E7; this interaction inhibits E7 oncogenic activity. Interacts with host TAF1; this interaction modulates E2-dependent transcriptional regulation. Interacts with host BRD4; this interaction mediates E2 transcriptional activation function. Additionally, the interaction with host BRD4 on mitotic chromosomes mediates tethering of the viral genome. Interacts with host TOPBP1; this interaction is required for optimal viral DNA replication. Phosphorylated. In terms of processing, sumoylation plays a regulatory role in E2 transcriptional activity.

The protein resides in the host nucleus. Its function is as follows. Plays a role in the initiation of viral DNA replication. A dimer of E2 interacts with a dimer of E1 in order to improve specificity of E1 DNA binding activity. Once the complex recognizes and binds DNA at specific sites, the E2 dimer is removed from DNA. E2 also regulates viral transcription through binding to the E2RE response element (5'-ACCNNNNNNGGT-3') present in multiple copies in the regulatory regions of the viral genome. Activates or represses transcription depending on E2RE's position with regards to proximal promoter elements including the TATA-box. Repression occurs by sterically hindering the assembly of the transcription initiation complex. This Homo sapiens (Human) protein is Regulatory protein E2.